The following is a 332-amino-acid chain: Glycerol-3-phosphate dehydrogenase [NAD(P)+] (332 aa).

3 residues coordinate NADPH: tryptophan 11, arginine 30, and lysine 108. Sn-glycerol 3-phosphate-binding residues include lysine 108, glycine 137, and serine 139. An NADPH-binding site is contributed by alanine 141. Lysine 192, aspartate 245, serine 255, arginine 256, and asparagine 257 together coordinate sn-glycerol 3-phosphate. Lysine 192 (proton acceptor) is an active-site residue. Arginine 256 provides a ligand contact to NADPH. NADPH is bound by residues valine 280 and glutamate 282.

It belongs to the NAD-dependent glycerol-3-phosphate dehydrogenase family.

The protein resides in the cytoplasm. The enzyme catalyses sn-glycerol 3-phosphate + NAD(+) = dihydroxyacetone phosphate + NADH + H(+). It carries out the reaction sn-glycerol 3-phosphate + NADP(+) = dihydroxyacetone phosphate + NADPH + H(+). The protein operates within membrane lipid metabolism; glycerophospholipid metabolism. Catalyzes the reduction of the glycolytic intermediate dihydroxyacetone phosphate (DHAP) to sn-glycerol 3-phosphate (G3P), the key precursor for phospholipid synthesis. This Burkholderia cenocepacia (strain HI2424) protein is Glycerol-3-phosphate dehydrogenase [NAD(P)+].